Consider the following 444-residue polypeptide: tRNA (guanine-N(7)-)-methyltransferase non-catalytic subunit TRM82 (444 aa).

WD repeat units lie at residues 1-47, 48-99, 100-147, 148-192, 193-237, 238-279, and 308-354; these read MSVI…WSDD, FDKI…LGAP, PIYS…KRFC, FSKR…EPIL, GHVS…DKWL, FGHK…STFD, and FAVS…ITFP. The tract at residues 55–92 is disordered; sequence RNTTAKEQQGQSSENENENKKLKSNKGDSIKRTAAKVP. Residues 71–85 show a composition bias toward basic and acidic residues; the sequence is NENKKLKSNKGDSIK. Ser93 is modified (phosphoserine).

The protein belongs to the WD repeat TRM82 family. Forms a heterodimer with the catalytic subunit TRM8.

It is found in the nucleus. It functions in the pathway tRNA modification; N(7)-methylguanine-tRNA biosynthesis. Its function is as follows. Required for the formation of N(7)-methylguanine at position 46 (m7G46) in tRNA, a modification required to maintain stability of tRNAs; its absence resulting in tRNA decay. In the complex, it is required to stabilize and induce conformational changes of the catalytic subunit. In Saccharomyces cerevisiae (strain ATCC 204508 / S288c) (Baker's yeast), this protein is tRNA (guanine-N(7)-)-methyltransferase non-catalytic subunit TRM82.